A 226-amino-acid polypeptide reads, in one-letter code: Uridylate kinase (226 aa).

6-10 contacts ATP; that stretch reads KISGK. G43 lines the UMP pocket. Residues G44 and R48 each coordinate ATP. Residues D65 and 113–119 contribute to the UMP site; that span reads FQPGQST. T139, N140, Y145, and D148 together coordinate ATP.

This sequence belongs to the UMP kinase family. As to quaternary structure, homohexamer.

The protein localises to the cytoplasm. The catalysed reaction is UMP + ATP = UDP + ADP. The protein operates within pyrimidine metabolism; CTP biosynthesis via de novo pathway; UDP from UMP (UMPK route): step 1/1. With respect to regulation, inhibited by UTP. In terms of biological role, catalyzes the reversible phosphorylation of UMP to UDP. This is Uridylate kinase from Sulfurisphaera tokodaii (strain DSM 16993 / JCM 10545 / NBRC 100140 / 7) (Sulfolobus tokodaii).